Consider the following 187-residue polypeptide: UPF0301 protein KPN78578_33170 (187 aa).

It belongs to the UPF0301 (AlgH) family.

The chain is UPF0301 protein KPN78578_33170 from Klebsiella pneumoniae subsp. pneumoniae (strain ATCC 700721 / MGH 78578).